The primary structure comprises 328 residues: Nitrilase (328 aa).

A CN hydrolase domain is found at 9–286; the sequence is VRVAAIQAEP…EGILYANVDV (278 aa). Glu49 acts as the Proton acceptor in catalysis. Lys131 is an active-site residue. The active-site Nucleophile is Cys166.

Belongs to the carbon-nitrogen hydrolase superfamily. Nitrilase family.

It carries out the reaction a nitrile + 2 H2O = a carboxylate + NH4(+). Nitrilase that hydrolyzes preferentially 4-cyanopyridine. Is also able to hydrolyze some aliphatic nitriles, such as (R,S)-mandelonitrile. The chain is Nitrilase from Penicillium rubens (strain ATCC 28089 / DSM 1075 / NRRL 1951 / Wisconsin 54-1255) (Penicillium chrysogenum).